The sequence spans 89 residues: Sec-independent protein translocase protein TatA (89 aa).

Residues 1 to 21 form a helical membrane-spanning segment; sequence MGGISIWQLLIIALIVVLLFG. Over residues 47–61 the composition is skewed to basic and acidic residues; that stretch reads EEKKALEENATDKPA. The tract at residues 47–89 is disordered; the sequence is EEKKALEENATDKPAADTAKVTETAKVAETAEKKAESKGKEQA. Residues 62–74 are compositionally biased toward low complexity; the sequence is ADTAKVTETAKVA. A compositionally biased stretch (basic and acidic residues) spans 75 to 89; sequence ETAEKKAESKGKEQA.

Belongs to the TatA/E family. In terms of assembly, the Tat system comprises two distinct complexes: a TatABC complex, containing multiple copies of TatA, TatB and TatC subunits, and a separate TatA complex, containing only TatA subunits. Substrates initially bind to the TatABC complex, which probably triggers association of the separate TatA complex to form the active translocon.

It localises to the cell inner membrane. Functionally, part of the twin-arginine translocation (Tat) system that transports large folded proteins containing a characteristic twin-arginine motif in their signal peptide across membranes. TatA could form the protein-conducting channel of the Tat system. This Shewanella pealeana (strain ATCC 700345 / ANG-SQ1) protein is Sec-independent protein translocase protein TatA.